The following is a 138-amino-acid chain: Ribosome-binding factor A (138 aa).

Residues 112 to 138 (EARTQGQEPAADVEPAPGAAPDDEAEE) form a disordered region. Low complexity predominate over residues 119–131 (EPAADVEPAPGAA).

It belongs to the RbfA family. Monomer. Binds 30S ribosomal subunits, but not 50S ribosomal subunits or 70S ribosomes.

It localises to the cytoplasm. Its function is as follows. One of several proteins that assist in the late maturation steps of the functional core of the 30S ribosomal subunit. Associates with free 30S ribosomal subunits (but not with 30S subunits that are part of 70S ribosomes or polysomes). Required for efficient processing of 16S rRNA. May interact with the 5'-terminal helix region of 16S rRNA. This chain is Ribosome-binding factor A, found in Anaeromyxobacter dehalogenans (strain 2CP-C).